Reading from the N-terminus, the 709-residue chain is MYVVNPQLVVLVDKDQEILDVLYLTLYDGIDERSSMYYFIKNHLRVPMDRVRVLKKHIILTLKISQVKGYICDLLNIDEEIIIYSHKNNLEYSYVDNTTFNPFTMTQRKTLLKSKSFLYNVYVDACNFLVIWVAKAADTMVKELGSYEEVDANVLKFESRLIEMFPDLDLDFTVESKFNNVFRTNLKMTGLKNIVLSNTDKKILFIKSDEYFINLSGNHFVINDESLNLSIWDDDGSLAISSDGNTITVNNVKLFTDMIPNNNVQMERIKSDITYKVKLSTPITSKVKLDIETSFIFIETATNNILLSVDKKISIILAKNHISIKVKNHIPNIEKYFTFLVVFINRLFNTVKQSMDFTKIETIYWSRICQNTKDKNRKPVIISSLEPDMLKVSDNFYKSPTKEVFVNNNEVMFTCDDKTGKYNNIGFLAIFYKLQKICIPCCFLKNQSHTDTFMACVHNKQTDKNIISPYILNYGKVVTDSKIAFLPPIFNDFFNSDLSISLESDNKRLKSTKGYHVIRSCLHNCRYYTLKRIRTKNDIIQFVNTENVTLIANDIVYFPMKYSSINNKIYILVQEIVHEIVIAKKEEDKDMIYFEELRTNKLRDMFPYKVKTVDIKEQNGLKLTTDGFYVDGELFTEPLSTKRSVFMDNISTQNNPIVKYFNSVFKYVVTDNKEIFIKTWVINTMLKLGIGKDYTHIQIKSILEKYYKL.

Belongs to the poxviridae VETF large subunit family. In terms of assembly, heterodimer of a 70 kDa and a 82 kDa subunit. Part of the early transcription complex composed of ETF, RAP94, and the DNA-directed RNA polymerase.

It is found in the virion. Its function is as follows. Acts with RNA polymerase to initiate transcription from early gene promoters. Is recruited by the RPO-associated protein of 94 kDa (RAP94) to form the early transcription complex, which also contains the core RNA polymerase. ETF heterodimer binds to early gene promoters. This Vertebrata (FPV) protein is Early transcription factor 82 kDa subunit (VETFL).